An 856-amino-acid chain; its full sequence is Facilitated trehalose transporter Tret1 (856 aa).

Disordered stretches follow at residues 1-27 and 62-202; these read MSGR…GKLK and DPFL…KATS. Residues 1–389 lie on the Cytoplasmic side of the membrane; sequence MSGRDNRGAG…LEVYRPTTNP (389 aa). A compositionally biased stretch (polar residues) spans 69-80; it reads VSPQRHPQTVRT. Residues 133–142 show a composition bias toward basic and acidic residues; it reads EIREHRDRQQ. A compositionally biased stretch (polar residues) spans 170–180; it reads GNSNTNNNKAA. Residues serine 247, serine 248, serine 249, serine 319, and serine 321 each carry the phosphoserine modification. The interval 326 to 345 is disordered; it reads LTSRQHFQQQRSISTDSRKS. Positions 329–340 are enriched in polar residues; sequence RQHFQQQRSIST. The chain crosses the membrane as a helical span at residues 390–410; that stretch reads IFIWTQVLAALSVSLGSLVVG. Over 411–439 the chain is Extracellular; the sequence is FVSAYTSPALVSMTDRNITSFEVTQDAGS. An N-linked (GlcNAc...) asparagine glycan is attached at asparagine 427. Residues 440-460 form a helical membrane-spanning segment; it reads WVGGIMPLAGLAGGIAGGPLI. At 461 to 472 the chain is on the cytoplasmic side; the sequence is EYLGRRNTILAT. Residues 473–493 traverse the membrane as a helical segment; that stretch reads AVPFIVSSLLIACAVNVAMVL. Residues 494–496 are Extracellular-facing; that stretch reads CGR. The chain crosses the membrane as a helical span at residues 497–517; the sequence is FLAGFCVGIASLSLPVYLGET. Residues 518-527 lie on the Cytoplasmic side of the membrane; the sequence is VQPEVRGTLG. The helical transmembrane segment at 528 to 548 threads the bilayer; sequence LLPTAFGNIGILLCFVAGSFM. Asparagine 549 carries N-linked (GlcNAc...) asparagine glycosylation. The Extracellular portion of the chain corresponds to 549 to 551; that stretch reads NWS. Residues 552–572 form a helical membrane-spanning segment; it reads MLAFLGAALPVPFLILMFLIP. Residues 573 to 635 lie on the Cytoplasmic side of the membrane; it reads ETPRWFVSRG…ELLKRNNLKP (63 aa). Residues 636–656 traverse the membrane as a helical segment; it reads LSISLGLMFFQQLSGINAVIF. Topologically, residues 657–672 are extracellular; it reads YTVQIFKDAGSTIDGN. The helical transmembrane segment at 673-693 threads the bilayer; that stretch reads ICTIIVGVVNFLATFIGIVLI. Over 694-699 the chain is Cytoplasmic; it reads DRAGRK. The helical transmembrane segment at 700 to 720 threads the bilayer; the sequence is ILLYVSNIAMILTLFVLGGFF. Over 721-739 the chain is Extracellular; that stretch reads YCKAHGPDVSNLGWLPLTC. Residues 740–760 traverse the membrane as a helical segment; that stretch reads FVIYILGFSLGFGPIPWLMMG. Topologically, residues 761–766 are cytoplasmic; that stretch reads EILPAK. A helical transmembrane segment spans residues 767–787; the sequence is IRGSAASVATAFNWSCTFVVT. Over 788–800 the chain is Extracellular; that stretch reads KTFQDLTVAMGAH. Residues 801–821 traverse the membrane as a helical segment; that stretch reads GAFWLFGAICFVGLFFVIIYV. Topologically, residues 822–856 are cytoplasmic; that stretch reads PETQGKTLEDIERKMMGRVRRMSSVANIKPLSFNM. A phosphoserine mark is found at serine 844 and serine 845.

The protein belongs to the major facilitator superfamily. Sugar transporter (TC 2.A.1.1) family. Trehalose transporter subfamily.

The protein resides in the cell membrane. Its function is as follows. Low-capacity facilitative transporter for trehalose. Does not transport maltose, sucrose or lactose. Mediates the bidirectional transfer of trehalose. Responsible for the transport of trehalose synthesized in the fat body and the incorporation of trehalose into other tissues that require a carbon source, thereby regulating trehalose levels in the hemolymph. The chain is Facilitated trehalose transporter Tret1 from Drosophila erecta (Fruit fly).